A 496-amino-acid polypeptide reads, in one-letter code: Probable cytosol aminopeptidase (496 aa).

Positions 251 and 256 each coordinate Mn(2+). Lysine 263 is an active-site residue. Aspartate 274, aspartate 333, and glutamate 335 together coordinate Mn(2+). Arginine 337 is an active-site residue.

It belongs to the peptidase M17 family. Mn(2+) is required as a cofactor.

The protein resides in the cytoplasm. The catalysed reaction is Release of an N-terminal amino acid, Xaa-|-Yaa-, in which Xaa is preferably Leu, but may be other amino acids including Pro although not Arg or Lys, and Yaa may be Pro. Amino acid amides and methyl esters are also readily hydrolyzed, but rates on arylamides are exceedingly low.. The enzyme catalyses Release of an N-terminal amino acid, preferentially leucine, but not glutamic or aspartic acids.. Its function is as follows. Presumably involved in the processing and regular turnover of intracellular proteins. Catalyzes the removal of unsubstituted N-terminal amino acids from various peptides. The protein is Probable cytosol aminopeptidase of Acidovorax ebreus (strain TPSY) (Diaphorobacter sp. (strain TPSY)).